Consider the following 583-residue polypeptide: Orphan steroid hormone receptor 2 (583 aa).

The nuclear receptor DNA-binding region spans 84-159 (IELCAVCGDK…MGMKSDSVQC (76 aa)). NR C4-type zinc fingers lie at residues 87–107 (CAVCGDKASGRHYGAISCEGC) and 123–142 (CRGNKDCQIIKHNRNRCQYC). The 316-residue stretch at 248–563 (TLASVVTSLA…SIIPYILRME (316 aa)) folds into the NR LBD domain.

This sequence belongs to the nuclear hormone receptor family. NR2 subfamily. In terms of assembly, binds DNA as a monomer. As to expression, expressed uniformly in the early embryo. In contrast, larval expression is localized to the epaulettes and mouth epithelium. Expressed in multiple adult organs including lantern muscle, tubefeet, intestine, coelomocytes and gonads. In the adult ovaries and testes, expression is specifically localized to the smooth muscle epithelial layer of cells which surround the ovarioles and acini, respectively (at protein level).

It localises to the cytoplasm. Its subcellular location is the nucleus. Its function is as follows. Orphan nuclear receptor. Binds to the hormone response element in the upstream promoter region of the CYIIIB gene in vitro. Both isoform 1 and isoform 2 bind DNA. The chain is Orphan steroid hormone receptor 2 from Strongylocentrotus purpuratus (Purple sea urchin).